Here is a 618-residue protein sequence, read N- to C-terminus: Probable Xaa-Pro aminopeptidase P (618 aa).

Residues D414, D425, E523, and E537 each contribute to the Mn(2+) site.

Belongs to the peptidase M24B family. Mn(2+) is required as a cofactor.

It carries out the reaction Release of any N-terminal amino acid, including proline, that is linked to proline, even from a dipeptide or tripeptide.. Functionally, catalyzes the removal of a penultimate prolyl residue from the N-termini of peptides. This Metarhizium acridum (strain CQMa 102) protein is Probable Xaa-Pro aminopeptidase P (AMPP).